The primary structure comprises 1460 residues: Nonribosomal peptide synthetase 6 (1460 aa).

The adenylation stretch occupies residues 63-468 (EQAALHPEKI…GRQDQQVKLR (406 aa)). Residues 600–675 (EPTTEMEIKL…AMATKIKPLS (76 aa)) form the Carrier 1 domain. Ser636 bears the O-(pantetheine 4'-phosphoryl)serine mark. The interval 712–1135 (VQDVYPCTPL…AVLDPSEAQD (424 aa)) is condensation. Carrier domains follow at residues 1168-1241 (SPNE…GNEK) and 1236-1312 (SIGN…EETD). 2 positions are modified to O-(pantetheine 4'-phosphoryl)serine: Ser1202 and Ser1273. The disordered stretch occupies residues 1303–1324 (ELASSAEETDSPQTETNSNAPY). The segment covering 1313 to 1322 (SPQTETNSNA) has biased composition (polar residues).

It belongs to the NRP synthetase family.

It functions in the pathway siderophore biosynthesis. In terms of biological role, NRPS involved in extracellular coprogen-type siderophores biosynthesis. The role of extracellular siderophores in fungal virulence to plants is to supply iron to the fungus during plant infection, but not to act as phytotoxins, depriving their hosts of iron. The sequence is that of Nonribosomal peptide synthetase 6 from Alternaria brassicicola (Dark leaf spot agent).